Reading from the N-terminus, the 280-residue chain is 4-diphosphocytidyl-2-C-methyl-D-erythritol kinase (280 aa).

Residue Lys-11 is part of the active site. Position 95 to 105 (95 to 105 (PVGAGLGGGSS)) interacts with ATP. Asp-137 is an active-site residue.

This sequence belongs to the GHMP kinase family. IspE subfamily.

The catalysed reaction is 4-CDP-2-C-methyl-D-erythritol + ATP = 4-CDP-2-C-methyl-D-erythritol 2-phosphate + ADP + H(+). The protein operates within isoprenoid biosynthesis; isopentenyl diphosphate biosynthesis via DXP pathway; isopentenyl diphosphate from 1-deoxy-D-xylulose 5-phosphate: step 3/6. Its function is as follows. Catalyzes the phosphorylation of the position 2 hydroxy group of 4-diphosphocytidyl-2C-methyl-D-erythritol. The sequence is that of 4-diphosphocytidyl-2-C-methyl-D-erythritol kinase from Geobacter sp. (strain M21).